The primary structure comprises 3619 residues: BEACH domain-containing protein lvsA (3619 aa).

Disordered regions lie at residues 1–117, 648–709, 1101–1129, 1367–1390, 1636–1658, 1893–1924, and 1964–1999; these read MFRR…NNNN, KIDD…EKEA, NNNN…NNDQ, SPNL…NSKK, IPTP…RKSI, SSIS…PTSG, and QQAA…NTPN. The span at 17–30 shows a compositional bias: pro residues; it reads PQVPHSPGHPPHQP. 8 stretches are compositionally biased toward low complexity: residues 31–59, 68–87, 97–117, 656–689, 1101–1127, 1375–1387, 1640–1652, and 1893–1923; these read PQQQ…QQPQ, SVSS…SFSS, EESS…NNNN, NNNN…NEEN, NNNN…NNNN, NNNN…GGSN, SSSS…SSTS, and SSIS…TPTS. One copy of the WD 1 repeat lies at 94 to 133; that stretch reads SATEESSSINSNNNNNNNKNNNNNNNSNIIESNINVWTIM. Over residues 1974 to 1986 the composition is skewed to polar residues; it reads MSIQSSPFQSKNL. Residues 2234–2258 adopt a coiled-coil conformation; the sequence is VKILEKLEADRVGLQKTVQSLYKSL. The stretch at 2294–2335 is one WD 2 repeat; the sequence is LDSDFMNAFCYPLYKLVISDQHEHVDNSIKLWRLLLSLKTSS. Disordered stretches follow at residues 2403 to 2457 and 2596 to 2785; these read KKQH…ITKK and NTSS…SEDE. The segment covering 2440-2452 has biased composition (basic and acidic residues); that stretch reads DRKDQSHQEEKSK. Positions 2596-2662 are enriched in low complexity; it reads NTSSITNNNN…TTTPQQSSSQ (67 aa). Composition is skewed to polar residues over residues 2663–2687 and 2694–2725; these read IKVS…SSSE and KLQS…SEEN. Low complexity-rich tracts occupy residues 2726–2735 and 2742–2764; these read SSLTSASTTL and TQTT…TTTT. Residues 2807–2932 form the BEACH-type PH domain; the sequence is KDPRLNGIMY…TRDEVYHTLV (126 aa). Positions 2940-2971 are disordered; sequence TIGGDAQGITGGQTGNDDNDDHHGGGGGRGVR. Residues 2944 to 2953 show a composition bias toward gly residues; sequence DAQGITGGQT. A compositionally biased stretch (basic and acidic residues) spans 2959–2971; it reads DDHHGGGGGRGVR. Residues 2972 to 3270 form the BEACH domain; sequence DRFTSIWRKS…QLFDKPHPKR (299 aa). WD repeat units follow at residues 3347 to 3386, 3389 to 3428, 3431 to 3471, 3474 to 3518, and 3563 to 3602; these read HHDG…LAKR, GHTG…YVRS, AHEG…NYKT, IAND…LPDN, and SHST…QVKQ. Residues 3516 to 3539 are disordered; that stretch reads PDNNNSNNNNNNNNNNNNNATQIP. Positions 3518–3534 are enriched in low complexity; it reads NNNSNNNNNNNNNNNNN.

Its subcellular location is the contractile vacuole membrane. Its function is as follows. Involved in myosin-independent cytokinesis and early steps of phagocytosis. Also involved in contractile vacuole-mediated osmoregulation. This Dictyostelium discoideum (Social amoeba) protein is BEACH domain-containing protein lvsA (lvsA).